Here is a 244-residue protein sequence, read N- to C-terminus: Fumarate reductase iron-sulfur subunit (244 aa).

Tyr14 is a binding site for a menaquinone. In terms of domain architecture, 2Fe-2S ferredoxin-type spans 16–97 (PEVDTAPHSA…GMKVEALANF (82 aa)). Residues Cys58, Cys63, Cys66, and Cys78 each contribute to the [2Fe-2S] cluster site. In terms of domain architecture, 4Fe-4S ferredoxin-type spans 140–169 (MAKYHQFSGCINCGLCYAACPQFGLNPEFI). Positions 149, 152, and 155 each coordinate [4Fe-4S] cluster. Residues Cys159, Cys205, and Cys211 each coordinate [3Fe-4S] cluster. Cys215 contributes to the [4Fe-4S] cluster binding site. Position 226–229 (226–229 (QQGK)) interacts with a menaquinone.

This sequence belongs to the succinate dehydrogenase/fumarate reductase iron-sulfur protein family. As to quaternary structure, fumarate dehydrogenase forms part of an enzyme complex containing four subunits: a flavoprotein, an iron-sulfur, and two hydrophobic anchor proteins. Requires [2Fe-2S] cluster as cofactor. It depends on [3Fe-4S] cluster as a cofactor. [4Fe-4S] cluster is required as a cofactor.

The protein localises to the cell inner membrane. It catalyses the reaction a quinone + succinate = fumarate + a quinol. The catalysed reaction is a menaquinone + succinate = a menaquinol + fumarate. Functionally, two distinct, membrane-bound, FAD-containing enzymes are responsible for the catalysis of fumarate and succinate interconversion; the fumarate reductase is used in anaerobic growth, and the succinate dehydrogenase is used in aerobic growth. The sequence is that of Fumarate reductase iron-sulfur subunit (frdB) from Escherichia coli O157:H7.